The sequence spans 375 residues: Alcohol dehydrogenase 1 (375 aa).

Serine 1 bears the N-acetylserine mark. Zn(2+) contacts are provided by cysteine 46, histidine 67, cysteine 97, cysteine 100, cysteine 103, cysteine 111, and cysteine 175. NAD(+) is bound by residues 200–205 (GLGGVG), aspartate 224, lysine 229, 293–295 (VGV), and arginine 370.

It belongs to the zinc-containing alcohol dehydrogenase family. Class-I subfamily. Homodimer. Zn(2+) serves as cofactor.

The protein resides in the cytoplasm. The enzyme catalyses a primary alcohol + NAD(+) = an aldehyde + NADH + H(+). It catalyses the reaction a secondary alcohol + NAD(+) = a ketone + NADH + H(+). The sequence is that of Alcohol dehydrogenase 1 (ADH1) from Coturnix japonica (Japanese quail).